Consider the following 493-residue polypeptide: Probable cytochrome P450 508A2 (493 aa).

Residues 1 to 21 (MIFGIIVYLFLIYILHNAYSK) form a helical membrane-spanning segment. C439 contacts heme.

This sequence belongs to the cytochrome P450 family. The cofactor is heme.

The protein localises to the membrane. This is Probable cytochrome P450 508A2 (cyp508A2-1) from Dictyostelium discoideum (Social amoeba).